A 1243-amino-acid polypeptide reads, in one-letter code: Serine/threonine-protein kinase/endoribonuclease IRE1 (1243 aa).

Positions 1–35 are cleaved as a signal peptide; the sequence is MMRRPPSQGRWSASHQKLLLAFAFILIPWLQLADA. The Lumenal segment spans residues 36–585; the sequence is QQQPQQPQIR…VKALPQSAAN (550 aa). Disordered regions lie at residues 70-132 and 149-172; these read HAAP…KPNY and QPVRAPHTSRHHWPSSSAASGLAS. The segment covering 73 to 85 has biased composition (basic and acidic residues); sequence PDVHPEAKFDTVN. Residues 90-99 show a composition bias toward polar residues; the sequence is QQSTASPQQH. Residues 163–172 show a composition bias toward low complexity; the sequence is SSSAASGLAS. Asn226, Asn470, and Asn554 each carry an N-linked (GlcNAc...) asparagine glycan. The chain crosses the membrane as a helical span at residues 586–606; that stretch reads SVIDFVSNPILIIFLIGSLIY. Residues 607–1243 are Cytoplasmic-facing; the sequence is NEKKLRRSYH…FREYYEPAGL (637 aa). Positions 638–765 are disordered; that stretch reads GDESGDDKDG…QSHENDPALT (128 aa). Over residues 650–660 the composition is skewed to low complexity; it reads PSSPSPRSQPQ. Positions 674-693 are enriched in basic and acidic residues; the sequence is ERNAGDQDKVKDNRSLHDVS. The segment covering 732–749 has biased composition (basic residues); the sequence is KKKKAHRGRRGGVKHRKG. Residues 809-1105 enclose the Protein kinase domain; sequence VDTDVELGMG…SREVMAHPFF (297 aa). Residues 815–823 and Lys837 contribute to the ATP site; that span reads LGMGSNGTV. Positions 819, 837, 881, and 883 each coordinate ADP. Asp931 acts as the Proton acceptor in catalysis. Mg(2+)-binding residues include Asn936 and Asp953. The KEN domain occupies 1108–1240; the sequence is PKKRLAFLCD…TDRFREYYEP (133 aa).

It belongs to the protein kinase superfamily. Ser/Thr protein kinase family. The cofactor is Mg(2+). Autophosphorylated mainly on serine residues; phosphorylation enables nucleotide binding by the active site.

The protein localises to the endoplasmic reticulum membrane. It carries out the reaction L-seryl-[protein] + ATP = O-phospho-L-seryl-[protein] + ADP + H(+). The catalysed reaction is L-threonyl-[protein] + ATP = O-phospho-L-threonyl-[protein] + ADP + H(+). In terms of biological role, senses unfolded proteins in the lumen of the endoplasmic reticulum via its N-terminal domain which leads to enzyme auto-activation. The active endoribonuclease domain splices precursor mRNAs to produce their mature form which then induces transcription of UPR target genes. The polypeptide is Serine/threonine-protein kinase/endoribonuclease IRE1 (Hypocrea jecorina (strain QM6a) (Trichoderma reesei)).